Consider the following 367-residue polypeptide: Porin Omp2a (367 aa).

An N-terminal signal peptide occupies residues 1-22; it reads MNIKSLLLGSAAALVAASGAQA.

This sequence belongs to the alphaproteobacteria porin family. Monomer.

It is found in the cell outer membrane. Forms passive diffusion pores that allow small molecular weight hydrophilic materials across the outer membrane. This chain is Porin Omp2a (omp2a), found in Brucella canis (strain ATCC 23365 / NCTC 10854 / RM-666).